Here is a 361-residue protein sequence, read N- to C-terminus: Peptide chain release factor 1 (361 aa).

Q237 carries the post-translational modification N5-methylglutamine.

It belongs to the prokaryotic/mitochondrial release factor family. Methylated by PrmC. Methylation increases the termination efficiency of RF1.

The protein localises to the cytoplasm. Its function is as follows. Peptide chain release factor 1 directs the termination of translation in response to the peptide chain termination codons UAG and UAA. This Chromohalobacter salexigens (strain ATCC BAA-138 / DSM 3043 / CIP 106854 / NCIMB 13768 / 1H11) protein is Peptide chain release factor 1.